Consider the following 414-residue polypeptide: Serine/threonine transporter SstT (414 aa).

At 2–15 (TTQRSPGLFRRLAH) the chain is on the cytoplasmic side. A helical transmembrane segment spans residues 16–36 (GSLVKQILVGLVLGILLAWIS). Residues 37-45 (KPAAEAVGL) lie on the Periplasmic side of the membrane. Residues 46–66 (LGTLFVGALKAVAPILVLMLV) form a helical membrane-spanning segment. Over 67 to 83 (MASIANHQHGQKTNILP) the chain is Cytoplasmic. Residues 84 to 104 (ILFLYLLGTFSAALAAVVFSF) traverse the membrane as a helical segment. The Periplasmic segment spans residues 105 to 142 (AFPSTLHLSSSAGDISPPSGIVEVMRGLVMSMVSNPID). A helical membrane pass occupies residues 143–163 (ALLKGNYIGILVWAIGLGFAL). Residues 164-179 (RHGNETTKNLVNDMSN) lie on the Cytoplasmic side of the membrane. The chain crosses the membrane as a helical span at residues 180–200 (AVTFMVKLVIRFAPIGIFGLV). Residues 201 to 217 (SSTLATTGFSTLWGYAQ) lie on the Periplasmic side of the membrane. Residues 218–238 (LLVVLVGCMLLVALVVNPLLV) traverse the membrane as a helical segment. At 239-299 (WWKIRRNPFP…VSIPLGATIN (61 aa)) the chain is on the cytoplasmic side. Residues 300–320 (MAGAAITITVLTLAAVNTLGI) form a helical membrane-spanning segment. Residues 321 to 331 (PVDLPTALLLS) lie on the Periplasmic side of the membrane. The helical transmembrane segment at 332-352 (VVASLCACGASGVAGGSLLLI) threads the bilayer. Over 353–414 (PLACNMFGIS…DRLANSALRN (62 aa)) the chain is Cytoplasmic.

This sequence belongs to the dicarboxylate/amino acid:cation symporter (DAACS) (TC 2.A.23) family.

It localises to the cell inner membrane. The catalysed reaction is L-serine(in) + Na(+)(in) = L-serine(out) + Na(+)(out). It catalyses the reaction L-threonine(in) + Na(+)(in) = L-threonine(out) + Na(+)(out). In terms of biological role, involved in the import of serine and threonine into the cell, with the concomitant import of sodium (symport system). This is Serine/threonine transporter SstT from Shigella dysenteriae serotype 1 (strain Sd197).